We begin with the raw amino-acid sequence, 183 residues long: Adenine phosphoribosyltransferase (183 aa).

Belongs to the purine/pyrimidine phosphoribosyltransferase family. In terms of assembly, homodimer.

The protein localises to the cytoplasm. The catalysed reaction is AMP + diphosphate = 5-phospho-alpha-D-ribose 1-diphosphate + adenine. It participates in purine metabolism; AMP biosynthesis via salvage pathway; AMP from adenine: step 1/1. Its function is as follows. Catalyzes a salvage reaction resulting in the formation of AMP, that is energically less costly than de novo synthesis. The chain is Adenine phosphoribosyltransferase from Blochmanniella floridana.